The sequence spans 271 residues: Monalysin (271 aa).

Residues 1–33 (MTIKEELGQPQSHSIELDEVSKEAASTRAALTS) constitute a propeptide that is removed on maturation. Residues 102–170 (IPQNVTTTLS…FTDTTEMKGP (69 aa)) form a pore-forming domain region.

Pro-Monalysin forms a stable donut-like 18-mer complex composed of two disk-shaped nonamers held together by N-terminal swapping of the pro-peptides. After proteolytic cleavage, the inactive 18-mer complex probably dissociates into two disk-shaped active nonamers in which the transmembrane segments are unmasked and ready to engage the conformational change leading to the pore formation into the target membrane. Multimerizes into circular-like structures and barrel-like aggregates. In terms of processing, requires N-terminal cleavage to become fully active. The metalloprotease AprA can induce the rapid cleavage of pro-Monalysin into its active form. Can also be processed by trypsin.

It localises to the secreted. The protein localises to the host cell membrane. Pore-forming toxin that contributes to the virulence of P.entomophila against Drosophila, playing an important role in host intestinal damage and lethality. Displays cytolytic and hemolytic activity. This Pseudomonas entomophila (strain L48) protein is Monalysin.